Here is a 97-residue protein sequence, read N- to C-terminus: MMNKLSEEEIQDKLKKFDGWTYAKKSIHTSFQFENFKEAFTVMTRIAFEAEAQQHHPNWGNVFNELEISLSTHDADGVTEKDFKLARAIEDIVESTN.

This sequence belongs to the pterin-4-alpha-carbinolamine dehydratase family.

The catalysed reaction is (4aS,6R)-4a-hydroxy-L-erythro-5,6,7,8-tetrahydrobiopterin = (6R)-L-erythro-6,7-dihydrobiopterin + H2O. The polypeptide is Putative pterin-4-alpha-carbinolamine dehydratase (Christiangramia forsetii (strain DSM 17595 / CGMCC 1.15422 / KT0803) (Gramella forsetii)).